We begin with the raw amino-acid sequence, 132 residues long: Small ribosomal subunit protein uS11 (132 aa).

This sequence belongs to the universal ribosomal protein uS11 family. Part of the 30S ribosomal subunit. Interacts with proteins S7 and S18. Binds to IF-3.

Its function is as follows. Located on the platform of the 30S subunit, it bridges several disparate RNA helices of the 16S rRNA. Forms part of the Shine-Dalgarno cleft in the 70S ribosome. This Chlamydia felis (strain Fe/C-56) (Chlamydophila felis) protein is Small ribosomal subunit protein uS11.